Here is a 290-residue protein sequence, read N- to C-terminus: Taxis protein CheF1 (290 aa).

Interacts with chemotaxis (Che) proteins as well as flagella accessory (Fla) proteins.

Involved in taxis signal transduction. Essential for the ability to control the direction of flagellar rotation. May have a role between CheY and the flagellum. The sequence is that of Taxis protein CheF1 (cheF1) from Halobacterium salinarum (strain ATCC 29341 / DSM 671 / R1).